The chain runs to 227 residues: 7-cyano-7-deazaguanine synthase (227 aa).

Position 7–17 (7–17 (LSGGMDSLVTT)) interacts with ATP. Residues C187, C195, C198, and C201 each contribute to the Zn(2+) site.

The protein belongs to the QueC family. The cofactor is Zn(2+).

The catalysed reaction is 7-carboxy-7-deazaguanine + NH4(+) + ATP = 7-cyano-7-deazaguanine + ADP + phosphate + H2O + H(+). Its pathway is purine metabolism; 7-cyano-7-deazaguanine biosynthesis. Functionally, catalyzes the ATP-dependent conversion of 7-carboxy-7-deazaguanine (CDG) to 7-cyano-7-deazaguanine (preQ(0)). In Chlorobium luteolum (strain DSM 273 / BCRC 81028 / 2530) (Pelodictyon luteolum), this protein is 7-cyano-7-deazaguanine synthase.